The chain runs to 232 residues: Putative uridine kinase DAS2 (232 aa).

ATP is bound at residue G17 to G24.

The protein belongs to the uridine kinase family.

The protein resides in the cytoplasm. Its subcellular location is the nucleus. The catalysed reaction is uridine + ATP = UMP + ADP + H(+). The enzyme catalyses cytidine + ATP = CMP + ADP + H(+). Its pathway is pyrimidine metabolism; CTP biosynthesis via salvage pathway; CTP from cytidine: step 1/3. It participates in pyrimidine metabolism; UMP biosynthesis via salvage pathway; UMP from uridine: step 1/1. In terms of biological role, putative uridine kinase identified in a screen for mutants with increased levels of rDNA transcription. This is Putative uridine kinase DAS2 (DAS2) from Saccharomyces cerevisiae (strain ATCC 204508 / S288c) (Baker's yeast).